Here is a 92-residue protein sequence, read N- to C-terminus: Enhancer of yellow 2 transcription factor (92 aa).

It belongs to the ENY2 family. As to quaternary structure, component of the nuclear pore complex (NPC)-associated TREX-2 complex (transcription and export complex 2). Component of the SAGA transcription coactivator-HAT complex. Within the SAGA complex, participates in a subcomplex of SAGA called the DUB module (deubiquitination module).

It localises to the nucleus. The protein localises to the nucleoplasm. Functionally, involved in mRNA export coupled transcription activation by association with both the TREX-2 and the SAGA complexes. The transcription regulatory histone acetylation (HAT) complex SAGA is a multiprotein complex that activates transcription by remodeling chromatin and mediating histone acetylation and deubiquitination. Within the SAGA complex, participates in a subcomplex that specifically deubiquitinates histones. The SAGA complex is recruited to specific gene promoters by activators, where it is required for transcription. The TREX-2 complex functions in docking export-competent ribonucleoprotein particles (mRNPs) to the nuclear entrance of the nuclear pore complex (nuclear basket). TREX-2 participates in mRNA export and accurate chromatin positioning in the nucleus by tethering genes to the nuclear periphery. In Aedes aegypti (Yellowfever mosquito), this protein is Enhancer of yellow 2 transcription factor.